The primary structure comprises 413 residues: E3 ubiquitin-protein ligase makorin (413 aa).

2 consecutive C3H1-type zinc fingers follow at residues 2-29 and 30-57; these read PRHE…HDVA and TRNE…HTRP. Residues 61–85 form a disordered region; the sequence is ELPSCSTPQTSQNQQNLQNSGQRVR. The span at 66-82 shows a compositional bias: low complexity; the sequence is STPQTSQNQQNLQNSGQ. The segment at 138 to 167 adopts a C3H1-type 3 zinc-finger fold; it reads QAQLMMCPYHQKSGDCNRQDMDCPFAHGNY. The segment at 213–267 adopts an RING-type zinc-finger fold; sequence CGICMENIFEKNLRFGILNGCQHCFCLDCIRQWRSKDQENVELATKTVRSCPECR. The segment at 296-327 adopts a C3H1-type 4 zinc-finger fold; that stretch reads NTKRKICKYYSNERSRGACPFGNKCFYKHQLP.

As to quaternary structure, component of a complex at least containing lep-2, lin-28 and the long non-coding RNA lep-5, which mediates the degradation of lin-28. Expressed in seam, tail tip, and other hypodermal cells, head and tail neurons, the pharynx, intestine and the developing hermaphrodite somatic gonad. Not expressed in body wall muscle cells.

It is found in the cytoplasm. It catalyses the reaction S-ubiquitinyl-[E2 ubiquitin-conjugating enzyme]-L-cysteine + [acceptor protein]-L-lysine = [E2 ubiquitin-conjugating enzyme]-L-cysteine + N(6)-ubiquitinyl-[acceptor protein]-L-lysine.. It participates in protein modification; protein ubiquitination. In terms of biological role, E3 ubiquitin ligase which catalyzes the covalent attachment of ubiquitin moieties onto substrate proteins. Promotes the larval to adult transition by binding to the long non-coding RNA lep-5 to target the heterochronic protein lin-28 for degradation by the proteasome. This association and degradation of lin-28 also controls the timing of the sexual differentiation of individual neurons in males including the AIM, AWA, ADF, ASJ and CEM neurons. Plays a role in governing the developmental timing of male tail tip morphogenesis. Plays a role in two aspects of male mating behavior: response to hermaphrodite contact and vulva location. May play a role in the detection of preferred food sources. The chain is E3 ubiquitin-protein ligase makorin from Caenorhabditis elegans.